The sequence spans 79 residues: Toxin ICK-20 (79 aa).

A signal peptide spans 1 to 20; sequence MMKYFLVLCLVVLGVAAVQA. 4 cysteine pairs are disulfide-bonded: Cys-43-Cys-57, Cys-50-Cys-61, Cys-56-Cys-78, and Cys-68-Cys-74. Asn-71 carries an N-linked (GlcNAc...) asparagine glycan.

This sequence belongs to the neurotoxin 13 (insecticidal toxin ABC) family. ICK-21 subfamily. Expressed by the venom gland.

The protein resides in the secreted. Ion channel inhibitor. This Trittame loki (Brush-footed trapdoor spider) protein is Toxin ICK-20.